We begin with the raw amino-acid sequence, 342 residues long: Endolytic peptidoglycan transglycosylase RlpA (342 aa).

A signal peptide spans 1–26 (MSKRVRSSLILPAVCGLGLAAVLLSS). A lipid anchor (N-palmitoyl cysteine) is attached at Cys-27. A lipid anchor (S-diacylglycerol cysteine) is attached at Cys-27. An SPOR domain is found at 261 to 342 (SLPADGLYLQ…LGQPTLVRPD (82 aa)).

Belongs to the RlpA family.

The protein localises to the cell membrane. Its function is as follows. Lytic transglycosylase with a strong preference for naked glycan strands that lack stem peptides. This Pseudomonas aeruginosa (strain ATCC 15692 / DSM 22644 / CIP 104116 / JCM 14847 / LMG 12228 / 1C / PRS 101 / PAO1) protein is Endolytic peptidoglycan transglycosylase RlpA.